Consider the following 1486-residue polypeptide: Chromosome partition protein MukB (1486 aa).

Position 34–41 (34–41 (GGNGAGKS)) interacts with ATP. 3 coiled-coil regions span residues 326 to 418 (LEAD…QYNQ), 444 to 480 (LETF…QAYQ), and 509 to 603 (RHLA…RAPV). The segment at 666–783 (PGGSEDQRLN…EVPLFGRAAR (118 aa)) is flexible hinge. Coiled-coil stretches lie at residues 835–923 (EAEI…AKLE), 977–1115 (EMLS…TAKA), and 1209–1266 (VEAI…QNVS).

It belongs to the SMC family. MukB subfamily. In terms of assembly, homodimerization via its hinge domain. Binds to DNA via its C-terminal region. Interacts, and probably forms a ternary complex, with MukE and MukF via its C-terminal region. The complex formation is stimulated by calcium or magnesium. Interacts with tubulin-related protein FtsZ.

It is found in the cytoplasm. The protein resides in the nucleoid. Its function is as follows. Plays a central role in chromosome condensation, segregation and cell cycle progression. Functions as a homodimer, which is essential for chromosome partition. Involved in negative DNA supercoiling in vivo, and by this means organize and compact chromosomes. May achieve or facilitate chromosome segregation by condensation DNA from both sides of a centrally located replisome during cell division. This Escherichia coli O157:H7 protein is Chromosome partition protein MukB.